The following is a 471-amino-acid chain: Heat shock 70 kDa protein 13 (471 aa).

Positions 1 to 22 are cleaved as a signal peptide; that stretch reads MAGEMTILGSAVLTLLLAGYLA. Positions 317 to 330 are enriched in basic and acidic residues; that stretch reads DSKEPQNGDSELPK. Positions 317-350 are disordered; it reads DSKEPQNGDSELPKDQLTPGDGHHVNRVFRPGLS.

Belongs to the heat shock protein 70 family. As to quaternary structure, binds UBQLN2.

Its subcellular location is the microsome. The protein resides in the endoplasmic reticulum. Functionally, has peptide-independent ATPase activity. The chain is Heat shock 70 kDa protein 13 (Hspa13) from Mus musculus (Mouse).